The chain runs to 140 residues: Hemoglobin subunit beta (140 aa).

In terms of domain architecture, Globin spans 1–140 (GGSDVSAFLA…VGEALAKGYH (140 aa)). 2 residues coordinate heme b: histidine 57 and histidine 86.

The protein belongs to the globin family. As to quaternary structure, heterotetramer of either two alpha-B chains or two alpha-C chains and two beta chains.

The beta chain is a component of adult hemoglobins B. And C. In Aquarana catesbeiana (American bullfrog), this protein is Hemoglobin subunit beta (HBB).